A 144-amino-acid chain; its full sequence is Cell division protein SepF (144 aa).

This sequence belongs to the SepF family. Homodimer. Interacts with FtsZ.

Its subcellular location is the cytoplasm. Functionally, cell division protein that is part of the divisome complex and is recruited early to the Z-ring. Probably stimulates Z-ring formation, perhaps through the cross-linking of FtsZ protofilaments. Its function overlaps with FtsA. The protein is Cell division protein SepF of Oceanobacillus iheyensis (strain DSM 14371 / CIP 107618 / JCM 11309 / KCTC 3954 / HTE831).